A 59-amino-acid polypeptide reads, in one-letter code: Alpha-like toxin CsEv5 (59 aa).

The LCN-type CS-alpha/beta domain occupies 1 to 59; sequence KDGYPVDSKGCKLSCVANNYCDNQCKMKKASGGHCYAMSCYCEGLPENAKVSDSATNIC. 4 cysteine pairs are disulfide-bonded: Cys-11–Cys-59, Cys-15–Cys-35, Cys-21–Cys-40, and Cys-25–Cys-42.

The protein belongs to the long (4 C-C) scorpion toxin superfamily. Sodium channel inhibitor family. Expressed by the venom gland.

The protein localises to the secreted. Binds voltage-independently sodium channels (Nav) and inhibits the inactivation of the activated channels, thereby blocking neuronal transmission. Is highly toxic to insects and barely toxic to mammals. As it does not compete with the classical alpha-toxin AaH2, this toxin is considered as an alpha-like toxin. This Centruroides sculpturatus (Arizona bark scorpion) protein is Alpha-like toxin CsEv5.